The primary structure comprises 220 residues: Deoxyribose-phosphate aldolase (220 aa).

Catalysis depends on Asp92, which acts as the Proton donor/acceptor. Lys157 serves as the catalytic Schiff-base intermediate with acetaldehyde. The active-site Proton donor/acceptor is Lys186.

The protein belongs to the DeoC/FbaB aldolase family. DeoC type 1 subfamily.

The protein localises to the cytoplasm. The catalysed reaction is 2-deoxy-D-ribose 5-phosphate = D-glyceraldehyde 3-phosphate + acetaldehyde. Its pathway is carbohydrate degradation; 2-deoxy-D-ribose 1-phosphate degradation; D-glyceraldehyde 3-phosphate and acetaldehyde from 2-deoxy-alpha-D-ribose 1-phosphate: step 2/2. Functionally, catalyzes a reversible aldol reaction between acetaldehyde and D-glyceraldehyde 3-phosphate to generate 2-deoxy-D-ribose 5-phosphate. The polypeptide is Deoxyribose-phosphate aldolase (Caldicellulosiruptor saccharolyticus (strain ATCC 43494 / DSM 8903 / Tp8T 6331)).